A 73-amino-acid chain; its full sequence is uncharacterized protein (73 aa).

Transmembrane regions (helical) follow at residues 7–27 (LFSS…IPNL) and 47–67 (YFGY…IIIL).

The protein resides in the cell membrane. This is an uncharacterized protein from Methanocaldococcus jannaschii (strain ATCC 43067 / DSM 2661 / JAL-1 / JCM 10045 / NBRC 100440) (Methanococcus jannaschii).